Here is a 531-residue protein sequence, read N- to C-terminus: rRNA methyltransferase 1, mitochondrial (531 aa).

The transit peptide at 1 to 40 directs the protein to the mitochondrion; that stretch reads MISIFKILSSPKPATTTTNIINPINIINGIRYFSSNQEDY. Disordered regions lie at residues 70–141 and 230–277; these read ESHY…RTEY and IEDE…KKTT. The segment covering 74–136 has biased composition (low complexity); the sequence is NNNNNSNNNS…NNFRNNNNNN (63 aa). Residues 247 to 267 show a composition bias toward acidic residues; that stretch reads EQNEYEEEQEEEKVQEEEEDN.

It belongs to the class IV-like SAM-binding methyltransferase superfamily. RNA methyltransferase TrmH family.

The protein resides in the mitochondrion. The catalysed reaction is a uridine in rRNA + S-adenosyl-L-methionine = a 2'-O-methyluridine in rRNA + S-adenosyl-L-homocysteine + H(+). Functionally, S-adenosyl-L-methionine-dependent 2'-O-ribose methyltransferase that catalyzes the formation of a 2'-O-methylguanosine in the mitochondrial large subunit ribosomal RNA (mtLSU rRNA), a universally conserved modification in the peptidyl transferase domain of the mtLSU rRNA. The sequence is that of rRNA methyltransferase 1, mitochondrial (mrm1) from Dictyostelium discoideum (Social amoeba).